The primary structure comprises 584 residues: Endogenous retrovirus group FC1 Env polyprotein (584 aa).

A signal peptide spans 1-22 (MARPSPLCLLLLLTLLTPIVPS). Residues 23–518 (NSLLTEPPFR…GWWQSPLTTW (496 aa)) are Extracellular-facing. Residues asparagine 69 and asparagine 247 are each glycosylated (N-linked (GlcNAc...) asparagine). The CXXC motif lies at 251–254 (CFLC). 8 N-linked (GlcNAc...) asparagine glycosylation sites follow: asparagine 272, asparagine 276, asparagine 308, asparagine 313, asparagine 322, asparagine 334, asparagine 342, and asparagine 346. Residues 384–404 (AVFPPLVIGVSLTSSLVASGL) are fusion peptide. The CKS-17 signature appears at 449-465 (MQNRRALDLLTADKGGT). Residues cysteine 466 and cysteine 473 are joined by a disulfide bond. A CX6CC motif is present at residues 466–474 (CMFLGEECC). N-linked (GlcNAc...) asparagine glycosylation is present at asparagine 478. A helical membrane pass occupies residues 519-539 (IIPFISPILIICLLLLIAPCV). The Cytoplasmic portion of the chain corresponds to 540 to 584 (LKFIKNRISEVSRVTVNQMLLHPYSRLPTSEDHYDDALTQQEAAR).

Belongs to the gamma type-C retroviral envelope protein family. HERV class-I F(c)1 env subfamily. In terms of assembly, the surface (SU) and transmembrane (TM) proteins form a heterodimer. SU and TM are attached by noncovalent interactions or by a labile interchain disulfide bond. In terms of processing, specific enzymatic cleavages in vivo yield the mature SU and TM proteins. The CXXC motif is highly conserved across a broad range of retroviral envelope proteins. It is thought to participate in the formation of a labile disulfide bond possibly with the CX6CC motif present in the transmembrane protein. Low expression in skin, testis and trachea.

It localises to the virion. Its subcellular location is the cell membrane. Its function is as follows. Retroviral envelope proteins mediate receptor recognition and membrane fusion during early infection. Endogenous envelope proteins may have kept, lost or modified their original function during evolution. This endogenous envelope protein has lost its original fusogenic properties. Functionally, SU mediates receptor recognition. TM anchors the envelope heterodimer to the viral membrane through one transmembrane domain. The other hydrophobic domain, called fusion peptide, mediates fusion of the viral membrane with the target cell membrane. This chain is Endogenous retrovirus group FC1 Env polyprotein (ERVFC1), found in Homo sapiens (Human).